We begin with the raw amino-acid sequence, 916 residues long: Protein prickle (916 aa).

Disordered regions lie at residues 49–105 (PLSP…AGGS) and 127–176 (QHLQ…IPVD). A compositionally biased stretch (low complexity) spans 145–156 (SSPSPALSSSIT). Residues 157 to 171 (TGGGGVTRGGGGGGH) are compositionally biased toward gly residues. One can recognise a PET domain in the interval 167-275 (GGGGHIIPVD…TVKQLATNQI (109 aa)). 3 LIM zinc-binding domains span residues 274 to 338 (QICD…ETLK), 339 to 399 (PRCS…MFAE), and 400 to 462 (YCDF…GEPP). 4 disordered regions span residues 460–593 (EPPT…PNHR), 635–671 (VIPG…QPQS), 692–725 (DAIQ…ENLP), and 763–870 (RSKS…DTVY). Composition is skewed to polar residues over residues 507 to 517 (SPISERSTPHS), 526 to 569 (EMST…SRTL), and 642 to 654 (AKTN…SMPE). Residues 655 to 671 (LSQSLQQQQQQQQQPQS) show a composition bias toward low complexity. Basic residues predominate over residues 777–793 (RSSKSKRRSSHHHQHHR). Over residues 796–805 (GESSSYSGTS) the composition is skewed to low complexity. The span at 829-844 (VPDVEFIEHQDHHRGD) shows a compositional bias: basic and acidic residues. Low complexity predominate over residues 852 to 867 (RSVCSTCSSSSSSADD).

This sequence belongs to the prickle / espinas / testin family. In terms of assembly, interacts with dsh; PET and LIM domains interact with dsh DEP domain, in wing cells. Interacts with Vang in photoreceptor cells.

Its subcellular location is the cell membrane. Its function is as follows. Acts in a planar cell polarity (PCP) complex; polarization along the apical/basal axis of epithelial cells. PCP signaling in the wing disk requires the receptor fz and the cytoplasmic proteins dsh and pk. These act in a feedback loop leading to activation of the jnk cascade and subsequent polarized arrangement of hairs and bristles. Dgo and pk compete with one another for dsh binding, thereby modulating fz dsh activity and ensuring tight control over fz PCP signaling. Vang, stan and pk function together to regulate the establishment of tissue polarity in the adult eye. The protein is Protein prickle of Aedes aegypti (Yellowfever mosquito).